A 360-amino-acid polypeptide reads, in one-letter code: Malate dehydrogenase (360 aa).

This sequence belongs to the LDH2/MDH2 oxidoreductase family. In terms of assembly, homodimer.

It is found in the cytoplasm. It carries out the reaction (S)-malate + NAD(+) = oxaloacetate + NADH + H(+). This chain is Malate dehydrogenase (mdh), found in Pyrococcus horikoshii (strain ATCC 700860 / DSM 12428 / JCM 9974 / NBRC 100139 / OT-3).